The following is a 229-amino-acid chain: Potassium/proton antiporter CemA (229 aa).

A run of 4 helical transmembrane segments spans residues 7 to 27, 114 to 134, 145 to 165, and 189 to 209; these read FTSL…SLSF, IICF…LVIL, LSDT…IGFH, and ILSS…KFWV.

It belongs to the CemA family.

The protein localises to the plastid. It is found in the chloroplast inner membrane. It catalyses the reaction K(+)(in) + H(+)(out) = K(+)(out) + H(+)(in). Functionally, contributes to K(+)/H(+) antiport activity by supporting proton efflux to control proton extrusion and homeostasis in chloroplasts in a light-dependent manner to modulate photosynthesis. Prevents excessive induction of non-photochemical quenching (NPQ) under continuous-light conditions. Indirectly promotes efficient inorganic carbon uptake into chloroplasts. This is Potassium/proton antiporter CemA from Daucus carota (Wild carrot).